Here is a 362-residue protein sequence, read N- to C-terminus: Glutaminyl-peptide cyclotransferase (362 aa).

Residues 1 to 35 (MAGSEDKRVVGTLHLLLLQATVLSLTAGNLSLVSA) form the signal peptide. N-linked (GlcNAc...) asparagine glycans are attached at residues Asn-29 and Asn-50. Cys-140 and Cys-165 are joined by a disulfide. Position 160 (Asp-160) interacts with Zn(2+). The active-site Proton acceptor is the Glu-202. A Zn(2+)-binding site is contributed by Glu-203. The active-site Proton acceptor is the Asp-249. A Zn(2+)-binding site is contributed by His-331.

Belongs to the glutaminyl-peptide cyclotransferase family.

Its subcellular location is the secreted. It catalyses the reaction N-terminal L-glutaminyl-[peptide] = N-terminal 5-oxo-L-prolyl-[peptide] + NH4(+). Responsible for the biosynthesis of pyroglutamyl peptides. Has a bias against acidic and tryptophan residues adjacent to the N-terminal glutaminyl residue and a lack of importance of chain length after the second residue. The polypeptide is Glutaminyl-peptide cyclotransferase (Qpct) (Mus musculus (Mouse)).